Here is a 1230-residue protein sequence, read N- to C-terminus: Soluble starch synthase 3, chloroplastic/amyloplastic (1230 aa).

A chloroplast-targeting transit peptide spans 1–60; the sequence is MDVPFPLHRSLSCTSVSNAITHLKIKPILGFVSHGTTSLSVQSSSWRKDGMVTGVSFSIC. Positions 66–189 are disordered; the sequence is RRRRKVSTPR…KDAVKLNKSK (124 aa). A compositionally biased stretch (basic and acidic residues) spans 124-145; sequence VEARVETSDDDTKGVVRDHKFL. Over residues 152-170 the composition is skewed to polar residues; it reads NGSTKSISMSPVRVSSQFV. The span at 177-189 shows a compositional bias: basic and acidic residues; it reads GDDKDAVKLNKSK. Lys794 is an ADP-alpha-D-glucose binding site.

Belongs to the glycosyltransferase 1 family. Bacterial/plant glycogen synthase subfamily. Tuber, sink and source leaves.

The protein localises to the plastid. It is found in the chloroplast. Its subcellular location is the amyloplast. The catalysed reaction is [(1-&gt;4)-alpha-D-glucosyl](n) + ADP-alpha-D-glucose = [(1-&gt;4)-alpha-D-glucosyl](n+1) + ADP + H(+). The protein operates within glycan biosynthesis; starch biosynthesis. Functionally, may account for most of the soluble starch synthase activity in the tubers. Contributes only a tiny percentage of the granule-bound activity, but may also contribute to the deposition of transient starch in chloroplasts of leaves. This is Soluble starch synthase 3, chloroplastic/amyloplastic (SS3) from Solanum tuberosum (Potato).